The following is an 895-amino-acid chain: Protein translocase subunit SecA (895 aa).

Residues Q86, 104–108 (GEGKT), and D494 each bind ATP. Low complexity-rich tracts occupy residues 838-849 (AAATPPGFGAPP) and 870-882 (GDAAATDADTGNR). The tract at residues 838–895 (AAATPPGFGAPPVRQQLQYSAPTAEGDVEVHAGDAAATDADTGNRAQRRANQRQQREV) is disordered.

Belongs to the SecA family. Monomer and homodimer. Part of the essential Sec protein translocation apparatus which comprises SecA, SecYEG and auxiliary proteins SecDF. Other proteins may also be involved.

Its subcellular location is the cell membrane. The protein resides in the cytoplasm. The enzyme catalyses ATP + H2O + cellular proteinSide 1 = ADP + phosphate + cellular proteinSide 2.. Its function is as follows. Part of the Sec protein translocase complex. Interacts with the SecYEG preprotein conducting channel. Has a central role in coupling the hydrolysis of ATP to the transfer of proteins into and across the cell membrane, serving as an ATP-driven molecular motor driving the stepwise translocation of polypeptide chains across the membrane. In Kineococcus radiotolerans (strain ATCC BAA-149 / DSM 14245 / SRS30216), this protein is Protein translocase subunit SecA.